Consider the following 260-residue polypeptide: Pyridoxine 5'-phosphate synthase (260 aa).

Asn10 and Arg21 together coordinate 3-amino-2-oxopropyl phosphate. His46 serves as the catalytic Proton acceptor. Residues Arg48 and His53 each coordinate 1-deoxy-D-xylulose 5-phosphate. Glu76 functions as the Proton acceptor in the catalytic mechanism. Thr113 contributes to the 1-deoxy-D-xylulose 5-phosphate binding site. Residue His204 is the Proton donor of the active site. 3-amino-2-oxopropyl phosphate-binding positions include Asp205 and 227–228; that span reads GH.

The protein belongs to the PNP synthase family. Homooctamer; tetramer of dimers.

It localises to the cytoplasm. The catalysed reaction is 3-amino-2-oxopropyl phosphate + 1-deoxy-D-xylulose 5-phosphate = pyridoxine 5'-phosphate + phosphate + 2 H2O + H(+). It functions in the pathway cofactor biosynthesis; pyridoxine 5'-phosphate biosynthesis; pyridoxine 5'-phosphate from D-erythrose 4-phosphate: step 5/5. Its function is as follows. Catalyzes the complicated ring closure reaction between the two acyclic compounds 1-deoxy-D-xylulose-5-phosphate (DXP) and 3-amino-2-oxopropyl phosphate (1-amino-acetone-3-phosphate or AAP) to form pyridoxine 5'-phosphate (PNP) and inorganic phosphate. The protein is Pyridoxine 5'-phosphate synthase of Xylella fastidiosa (strain 9a5c).